A 410-amino-acid polypeptide reads, in one-letter code: Histidine--tRNA ligase (410 aa).

It belongs to the class-II aminoacyl-tRNA synthetase family. As to quaternary structure, homodimer.

Its subcellular location is the cytoplasm. The enzyme catalyses tRNA(His) + L-histidine + ATP = L-histidyl-tRNA(His) + AMP + diphosphate + H(+). This is Histidine--tRNA ligase from Elusimicrobium minutum (strain Pei191).